Reading from the N-terminus, the 583-residue chain is uncharacterized protein (583 aa).

24–140 (ILADIDDEQL…SAMLRAMARM (117 aa)) is a binding site for a nucleoside 3',5'-cyclic phosphate. Positions 309–469 (LVMAGGGARG…LNNLPANVMC (161 aa)) constitute a PNPLA domain. Residues 313-318 (GGGARG) carry the GXGXXG motif. The short motif at 340 to 344 (GTSSG) is the GXSXG element. Residue serine 342 is the Nucleophile of the active site. The active-site Proton acceptor is aspartate 456. Positions 456-458 (DGG) match the DGA/G motif.

This sequence belongs to the NTE family.

This is an uncharacterized protein from Mycobacterium bovis (strain ATCC BAA-935 / AF2122/97).